A 261-amino-acid polypeptide reads, in one-letter code: Aminoglycoside N(3)-acetyltransferase IV (261 aa).

This sequence belongs to the antibiotic N-acetyltransferase family.

The catalysed reaction is a 2-deoxystreptamine antibiotic + acetyl-CoA = an N(3)-acetyl-2-deoxystreptamine antibiotic + CoA + H(+). Resistance to antibiotics containing the 2-deoxy-streptamine ring including gentamicin, kanamycin, tobramycin, neomycin and apramycin. The chain is Aminoglycoside N(3)-acetyltransferase IV (aacC4) from Salmonella sp.